We begin with the raw amino-acid sequence, 713 residues long: Probable muscarinic acetylcholine receptor gar-1 (713 aa).

Residues 1 to 20 (MPNYTVPPDPADTSWDSPYS) are Extracellular-facing. N-linked (GlcNAc...) asparagine glycosylation occurs at asparagine 3. Residues 21-41 (IPVQIVVWIIIIVLSLETIIG) form a helical membrane-spanning segment. Residues 42 to 66 (NAMVVMAYRIERNISKQVSNRYIVS) are Cytoplasmic-facing. Residues 67–87 (LAISDLIIGIEGFPFFTVYVL) form a helical membrane-spanning segment. At 88–101 (NGDRWPLGWVACQT) the chain is on the extracellular side. Cysteine 99 and cysteine 180 are disulfide-bonded. A helical transmembrane segment spans residues 102-122 (WLFLDYTLCLVSILTVLLITA). Residues 123–144 (DRYLSVCHTAKYLKWQSPTKTQ) are Cytoplasmic-facing. Residues 145-165 (LLIVMSWLLPAIIFGIMIYGW) traverse the membrane as a helical segment. Over 166–189 (QAMTGQSTSMSGAECSAPFLSNPY) the chain is Extracellular. A helical transmembrane segment spans residues 190 to 210 (VNMGMYVAYYWTTLVAMLILY). At 211–633 (KGIHQAAKNL…QTKAEKRAHK (423 aa)) the chain is on the cytoplasmic side. 4 disordered regions span residues 256–350 (KEKA…SRRC), 381–403 (SRYS…VEKA), 427–475 (KNTD…KQAE), and 515–585 (LIRR…TDTF). Polar residues-rich tracts occupy residues 266–275 (SGYTSNQAGD) and 287–315 (PETS…NDQN). 2 stretches are compositionally biased toward basic and acidic residues: residues 320 to 333 (EEER…RESN) and 393 to 403 (HENDEKEVEKA). The segment covering 429–439 (TDSNNDSDTTS) has biased composition (low complexity). Over residues 444–457 (RSRKYKKNKRPRSS) the composition is skewed to basic residues. A compositionally biased stretch (polar residues) spans 557–571 (LTVNNENRGETSSQP). The helical transmembrane segment at 634-656 (AFRTITFIVGFFAILWSPYYIMA) threads the bilayer. Over 657-670 (TVYGFCKGECIPSF) the chain is Extracellular. The helical transmembrane segment at 671–693 (LYTLSYYMCYLNSSGNPFAYALA) threads the bilayer. The Cytoplasmic segment spans residues 694-713 (NRQFRSAFMRMFRGNFNKVA).

This sequence belongs to the G-protein coupled receptor 1 family. Muscarinic acetylcholine receptor subfamily. In terms of tissue distribution, expressed in head region of the larva. In adults, expression is seen in the periventricularis magnocellularis (PVM) neuron.

The protein localises to the cell membrane. Its function is as follows. The muscarinic acetylcholine receptor mediates various cellular responses, including inhibition of adenylate cyclase, breakdown of phosphoinositides and modulation of potassium channels through the action of G proteins. Primary transducing effect is Pi turnover. The sequence is that of Probable muscarinic acetylcholine receptor gar-1 (gar-1) from Caenorhabditis elegans.